The following is a 182-amino-acid chain: Adenylate kinase (182 aa).

12-17 (GAGKGT) contacts ATP. The tract at residues 32 to 61 (STGDLLREEVSGGTDLGKKAELIMNKGELV) is NMP. Residues threonine 33, arginine 38, 59 to 61 (ELV), 85 to 88 (GFPR), and glutamine 92 each bind AMP. An LID region spans residues 126–132 (GRGRKDD). An ATP-binding site is contributed by arginine 127. AMP contacts are provided by arginine 129 and arginine 140. Position 168 (glycine 168) interacts with ATP.

The protein belongs to the adenylate kinase family. In terms of assembly, monomer.

The protein localises to the cytoplasm. The catalysed reaction is AMP + ATP = 2 ADP. The protein operates within purine metabolism; AMP biosynthesis via salvage pathway; AMP from ADP: step 1/1. Functionally, catalyzes the reversible transfer of the terminal phosphate group between ATP and AMP. Plays an important role in cellular energy homeostasis and in adenine nucleotide metabolism. This is Adenylate kinase from Prochlorococcus marinus (strain SARG / CCMP1375 / SS120).